A 245-amino-acid polypeptide reads, in one-letter code: Eukaryotic translation initiation factor 6 (245 aa).

Belongs to the eIF-6 family. As to quaternary structure, monomer. Associates with the 60S ribosomal subunit.

Its subcellular location is the cytoplasm. It is found in the nucleus. The protein localises to the nucleolus. Functionally, binds to the 60S ribosomal subunit and prevents its association with the 40S ribosomal subunit to form the 80S initiation complex in the cytoplasm. May also be involved in ribosome biogenesis. The protein is Eukaryotic translation initiation factor 6 of Ostreococcus lucimarinus (strain CCE9901).